Reading from the N-terminus, the 203-residue chain is ADP-ribosylation factor-like protein 6-interacting protein 1 (203 aa).

Topologically, residues Met1 to Arg41 are cytoplasmic. The chain crosses the membrane as a helical span at residues Ala42–Leu62. The Lumenal segment spans residues Asp63–Ser65. Residues Val66 to Ile86 traverse the membrane as a helical segment. The Cytoplasmic portion of the chain corresponds to Leu87–Lys133. Residues Pro134 to Asn175 form a helical membrane-spanning segment. Over Gln176 to Glu203 the chain is Lumenal.

The protein belongs to the ARL6ip family. In terms of assembly, homooligomer. Heterodimer with ARL6IP5. Interacts with ARL6. Interacts with TMEM33. Interacts with ATL1. As to expression, expressed in all hematopoietic cell lineages, but the highest level of expression is found in early myeloid progenitor cells. Expressed in brain, bone marrow, thymus and lung. Expressed at low level in liver, kidney and spleen. Not detected in heart.

It is found in the endomembrane system. It localises to the endoplasmic reticulum membrane. The protein resides in the endoplasmic reticulum. Positively regulates SLC1A1/EAAC1-mediated glutamate transport by increasing its affinity for glutamate in a PKC activity-dependent manner. Promotes the catalytic efficiency of SLC1A1/EAAC1 probably by reducing its interaction with ARL6IP5, a negative regulator of SLC1A1/EAAC1-mediated glutamate transport. Plays a role in the formation and stabilization of endoplasmic reticulum tubules. Negatively regulates apoptosis, possibly by modulating the activity of caspase-9 (CASP9). Inhibits cleavage of CASP9-dependent substrates and downstream markers of apoptosis but not CASP9 itself. May be involved in protein transport, membrane trafficking, or cell signaling during hematopoietic maturation. This Homo sapiens (Human) protein is ADP-ribosylation factor-like protein 6-interacting protein 1 (ARL6IP1).